A 365-amino-acid polypeptide reads, in one-letter code: Outer membrane lipoprotein A (365 aa).

The N-terminal stretch at 1–19 (MNIATKLMASLVASVVLTA) is a signal peptide. Residues 19 to 121 (ACSGGGSSGS…KGEELSKDKS (103 aa)) are disordered. The N-palmitoyl cysteine moiety is linked to residue cysteine 20. A lipid anchor (S-diacylglycerol cysteine) is attached at cysteine 20. Composition is skewed to basic and acidic residues over residues 48 to 68 (EQPK…EPKE) and 105 to 121 (NPQK…KDKS).

The protein localises to the cell outer membrane. The chain is Outer membrane lipoprotein A (omlA) from Actinobacillus pleuropneumoniae (Haemophilus pleuropneumoniae).